We begin with the raw amino-acid sequence, 426 residues long: D-tagatose-1,6-bisphosphate aldolase subunit KbaZ (426 aa).

This sequence belongs to the GatZ/KbaZ family. KbaZ subfamily. Forms a complex with KbaY.

It functions in the pathway carbohydrate metabolism; D-tagatose 6-phosphate degradation; D-glyceraldehyde 3-phosphate and glycerone phosphate from D-tagatose 6-phosphate: step 2/2. In terms of biological role, component of the tagatose-1,6-bisphosphate aldolase KbaYZ that is required for full activity and stability of the Y subunit. Could have a chaperone-like function for the proper and stable folding of KbaY. When expressed alone, KbaZ does not show any aldolase activity. This is D-tagatose-1,6-bisphosphate aldolase subunit KbaZ from Shigella flexneri.